A 366-amino-acid chain; its full sequence is Glutamate 5-kinase (366 aa).

Lys-17 lines the ATP pocket. Positions 57, 144, and 156 each coordinate substrate. Residues 176–177 (SD) and 216–222 (TGGMASK) each bind ATP. The PUA domain occupies 278–352 (QGILHIDEGA…GKSTQELPAE (75 aa)).

This sequence belongs to the glutamate 5-kinase family.

It is found in the cytoplasm. The catalysed reaction is L-glutamate + ATP = L-glutamyl 5-phosphate + ADP. It functions in the pathway amino-acid biosynthesis; L-proline biosynthesis; L-glutamate 5-semialdehyde from L-glutamate: step 1/2. In terms of biological role, catalyzes the transfer of a phosphate group to glutamate to form L-glutamate 5-phosphate. This Rhodococcus opacus (strain B4) protein is Glutamate 5-kinase.